The chain runs to 246 residues: Ribulose-phosphate 3-epimerase (246 aa).

Ser-9 is a substrate binding site. His-34, Asp-36, and His-83 together coordinate a divalent metal cation. Asp-36 acts as the Proton acceptor in catalysis. Substrate-binding positions include His-83, 159–162, 188–190, and 210–212; these read GFGG, DGG, and GTS. An a divalent metal cation-binding site is contributed by Asp-188. Asp-188 serves as the catalytic Proton donor.

This sequence belongs to the ribulose-phosphate 3-epimerase family. It depends on Co(2+) as a cofactor. Fe(2+) is required as a cofactor. Mn(2+) serves as cofactor. The cofactor is Zn(2+).

The catalysed reaction is D-ribulose 5-phosphate = D-xylulose 5-phosphate. The protein operates within carbohydrate degradation; pentose phosphate pathway; D-xylulose 5-phosphate from D-ribulose 5-phosphate (non-oxidative stage): step 1/1. Functionally, catalyzes the reversible epimerization of D-ribulose 5-phosphate to D-xylulose 5-phosphate. The polypeptide is Ribulose-phosphate 3-epimerase (RPE1) (Candida glabrata (strain ATCC 2001 / BCRC 20586 / JCM 3761 / NBRC 0622 / NRRL Y-65 / CBS 138) (Yeast)).